Reading from the N-terminus, the 481-residue chain is Protein hedgehog (481 aa).

Residues 1–19 (MDNQAVSALWSCASATCLS) form the signal peptide. The propeptide occupies 20 to 90 (LDAKRHSIEP…LALNFRHAHS (71 aa)). Residues 26-56 (SIEPNPDGQASPDVNNNNNNHNKSTTTVDAH) form a disordered region. Cys-91 carries the N-palmitoyl cysteine lipid modification. Positions 155, 156, 161, 191, 192, 195, and 197 each coordinate Ca(2+). Residue Gly-264 is the site of Cholesterol glycine ester attachment.

Belongs to the hedgehog family. In terms of assembly, interacts with shf. The C-terminal part of the hedgehog protein precursor displays an autoproteolysis activity that results in the cleavage of the full-length protein into two parts (N-product and C-product). In addition, the C-terminal part displays a cholesterol transferase activity that results by the covalent attachment of a cholesterol moiety to the C-terminal of the newly generated N-product. The N-product is the active species in both local and long-range signaling, whereas the C-product has no signaling activity. Post-translationally, cholesterylation is required for N-product targeting to lipid rafts and multimerization. In terms of processing, N-palmitoylation by Rasp of the hedgehog N-product, within the secretory pathway, is required for the embryonic and larval patterning activities of the hedgehog signal.

The protein localises to the nucleus. It localises to the cytoplasm. The protein resides in the cell membrane. It carries out the reaction glycyl-L-cysteinyl-[protein] + cholesterol + H(+) = [protein]-C-terminal glycyl cholesterol ester + N-terminal L-cysteinyl-[protein]. Its function is as follows. The C-terminal part of the hedgehog protein precursor displays an autoproteolysis activity that results in the cleavage of the full-length protein into two parts (N-product and C-product). In addition, the C-terminal part displays a cholesterol transferase activity that results by the covalent attachment of a cholesterol moiety to the C-terminal of the newly generated N-product. Once cleaved, the C-product has no signaling activity and diffuses from the cell. Functionally, the dually lipidated hedgehog protein N-product is a morphogen which is essential for a variety of patterning events during development. Establishes the anterior-posterior axis of the embryonic segments and patterns the larval imaginal disks. Binds to the patched (ptc) receptor, which functions in association with smoothened (smo), to activate the transcription of target genes wingless (wg), decapentaplegic (dpp) and ptc. In the absence of hh, ptc represses the constitutive signaling activity of smo through fused (fu). Essential component of a signaling pathway which regulates the Duox-dependent gut immune response to bacterial uracil; required to activate Cad99C-dependent endosome formation, norpA-dependent Ca2+ mobilization and p38 MAPK, which are essential steps in the Duox-dependent production of reactive oxygen species (ROS) in response to intestinal bacterial infection. During photoreceptor differentiation, it up-regulates transcription of Ubr3, which in turn promotes the hh-signaling pathway by mediating the ubiquitination and degradation of cos. The protein is Protein hedgehog of Drosophila hydei (Fruit fly).